A 356-amino-acid polypeptide reads, in one-letter code: UDP-N-acetylglucosamine--N-acetylmuramyl-(pentapeptide) pyrophosphoryl-undecaprenol N-acetylglucosamine transferase (356 aa).

UDP-N-acetyl-alpha-D-glucosamine is bound by residues 13–15, N125, R161, S189, I243, and Q288; that span reads TGG.

This sequence belongs to the glycosyltransferase 28 family. MurG subfamily.

It is found in the cell inner membrane. It carries out the reaction di-trans,octa-cis-undecaprenyl diphospho-N-acetyl-alpha-D-muramoyl-L-alanyl-D-glutamyl-meso-2,6-diaminopimeloyl-D-alanyl-D-alanine + UDP-N-acetyl-alpha-D-glucosamine = di-trans,octa-cis-undecaprenyl diphospho-[N-acetyl-alpha-D-glucosaminyl-(1-&gt;4)]-N-acetyl-alpha-D-muramoyl-L-alanyl-D-glutamyl-meso-2,6-diaminopimeloyl-D-alanyl-D-alanine + UDP + H(+). It functions in the pathway cell wall biogenesis; peptidoglycan biosynthesis. Cell wall formation. Catalyzes the transfer of a GlcNAc subunit on undecaprenyl-pyrophosphoryl-MurNAc-pentapeptide (lipid intermediate I) to form undecaprenyl-pyrophosphoryl-MurNAc-(pentapeptide)GlcNAc (lipid intermediate II). This is UDP-N-acetylglucosamine--N-acetylmuramyl-(pentapeptide) pyrophosphoryl-undecaprenol N-acetylglucosamine transferase from Cupriavidus metallidurans (strain ATCC 43123 / DSM 2839 / NBRC 102507 / CH34) (Ralstonia metallidurans).